We begin with the raw amino-acid sequence, 532 residues long: Optineurin (532 aa).

Coiled coils occupy residues 27 to 143 (SMKN…LKLG) and 195 to 466 (EEVA…EEMM). The segment at 502–532 (QPSITVYTCPKCNLTVPDMDTLQIHVMDCIT) adopts a CCHC NOA-type zinc-finger fold. Zn(2+)-binding residues include Cys510, Cys513, His526, and Cys530.

Its subcellular location is the cytoplasm. It is found in the perinuclear region. The protein localises to the golgi apparatus. The protein resides in the trans-Golgi network. It localises to the cytoplasmic vesicle. Its subcellular location is the recycling endosome. It is found in the autophagosome. Functionally, probably part of the TNF-alpha signaling pathway that can shift the equilibrium toward induction of cell death. May act by regulating membrane trafficking and cellular morphogenesis. The sequence is that of Optineurin (optn) from Xenopus laevis (African clawed frog).